Consider the following 157-residue polypeptide: MKILYPGTFDPLTNGHLDLIERAEKIFGKLVVAVLENTSKTPTFNLERRIIQIKNSLSHLPNIEVISYSGLTVDCANDLKANLILRGLRAMSDFEYELQIAHTNKSLNNDIETIFLSTNTNYSFLSSSLVKEVAKFGGEINHMVPPSVEKDLKDYFK.

Position 8 (Thr-8) interacts with substrate. ATP contacts are provided by residues 8–9 and His-16; that span reads TF. Substrate is bound by residues Lys-40, Thr-72, and Arg-86. Residues 87-89, Glu-97, and 122-128 contribute to the ATP site; these read GLR and YSFLSSS.

Belongs to the bacterial CoaD family. Homohexamer. Requires Mg(2+) as cofactor.

It is found in the cytoplasm. The catalysed reaction is (R)-4'-phosphopantetheine + ATP + H(+) = 3'-dephospho-CoA + diphosphate. It functions in the pathway cofactor biosynthesis; coenzyme A biosynthesis; CoA from (R)-pantothenate: step 4/5. Functionally, reversibly transfers an adenylyl group from ATP to 4'-phosphopantetheine, yielding dephospho-CoA (dPCoA) and pyrophosphate. The chain is Phosphopantetheine adenylyltransferase from Prochlorococcus marinus (strain MIT 9301).